Here is a 339-residue protein sequence, read N- to C-terminus: Isopentenyl-diphosphate delta-isomerase (339 aa).

7–8 lines the substrate pocket; it reads RK. FMN-binding positions include S65, 66 to 68, S96, and N125; that span reads SMT. Position 96 to 98 (96 to 98) interacts with substrate; sequence SQR. Q160 is a substrate binding site. E161 is a binding site for Mg(2+). Residues K192, T222, and 293–294 contribute to the FMN site; that span reads AG.

The protein belongs to the IPP isomerase type 2 family. Homooctamer. Dimer of tetramers. FMN serves as cofactor. It depends on NADPH as a cofactor. Requires Mg(2+) as cofactor.

It localises to the cytoplasm. It carries out the reaction isopentenyl diphosphate = dimethylallyl diphosphate. Its function is as follows. Involved in the biosynthesis of isoprenoids. Catalyzes the 1,3-allylic rearrangement of the homoallylic substrate isopentenyl (IPP) to its allylic isomer, dimethylallyl diphosphate (DMAPP). This is Isopentenyl-diphosphate delta-isomerase from Vibrio parahaemolyticus serotype O3:K6 (strain RIMD 2210633).